The primary structure comprises 273 residues: Large ribosomal subunit protein uL2 (273 aa).

The disordered stretch occupies residues 221–262 (RGTAMNPVDHPHGGGEGRNFGKHPVTPWGVQTKGKKTRHNKR). A compositionally biased stretch (basic residues) spans 253–262 (KGKKTRHNKR).

It belongs to the universal ribosomal protein uL2 family. As to quaternary structure, part of the 50S ribosomal subunit. Forms a bridge to the 30S subunit in the 70S ribosome.

Functionally, one of the primary rRNA binding proteins. Required for association of the 30S and 50S subunits to form the 70S ribosome, for tRNA binding and peptide bond formation. It has been suggested to have peptidyltransferase activity; this is somewhat controversial. Makes several contacts with the 16S rRNA in the 70S ribosome. The protein is Large ribosomal subunit protein uL2 of Aggregatibacter actinomycetemcomitans (Actinobacillus actinomycetemcomitans).